The sequence spans 256 residues: Isoprenyl transferase 1 (256 aa).

The active site involves D34. D34 contributes to the Mg(2+) binding site. Residues 35 to 38 (GNRR), W39, H52, and 80 to 82 (STE) each bind substrate. N83 serves as the catalytic Proton acceptor. Residues R86, R205, and 211–213 (RLS) contribute to the substrate site. E224 contacts Mg(2+).

It belongs to the UPP synthase family. Homodimer. Requires Mg(2+) as cofactor.

Catalyzes the condensation of isopentenyl diphosphate (IPP) with allylic pyrophosphates generating different type of terpenoids. This is Isoprenyl transferase 1 from Corynebacterium efficiens (strain DSM 44549 / YS-314 / AJ 12310 / JCM 11189 / NBRC 100395).